The sequence spans 370 residues: uncharacterized protein (370 aa).

Lys207 carries the post-translational modification N6-(pyridoxal phosphate)lysine.

It belongs to the class-V pyridoxal-phosphate-dependent aminotransferase family. Pyridoxal 5'-phosphate serves as cofactor.

This is an uncharacterized protein from Bacillus subtilis (strain 168).